The primary structure comprises 100 residues: Large ribosomal subunit protein uL23 (100 aa).

Belongs to the universal ribosomal protein uL23 family. As to quaternary structure, part of the 50S ribosomal subunit. Contacts protein L29, and trigger factor when it is bound to the ribosome.

Functionally, one of the early assembly proteins it binds 23S rRNA. One of the proteins that surrounds the polypeptide exit tunnel on the outside of the ribosome. Forms the main docking site for trigger factor binding to the ribosome. The polypeptide is Large ribosomal subunit protein uL23 (Kosmotoga olearia (strain ATCC BAA-1733 / DSM 21960 / TBF 19.5.1)).